The chain runs to 151 residues: Deoxyuridine 5'-triphosphate nucleotidohydrolase (151 aa).

Substrate is bound by residues 70–72 (RSG), N83, 87–89 (LID), and M97.

This sequence belongs to the dUTPase family. Mg(2+) serves as cofactor.

The catalysed reaction is dUTP + H2O = dUMP + diphosphate + H(+). Its pathway is pyrimidine metabolism; dUMP biosynthesis; dUMP from dCTP (dUTP route): step 2/2. Functionally, this enzyme is involved in nucleotide metabolism: it produces dUMP, the immediate precursor of thymidine nucleotides and it decreases the intracellular concentration of dUTP so that uracil cannot be incorporated into DNA. The chain is Deoxyuridine 5'-triphosphate nucleotidohydrolase from Pseudomonas aeruginosa (strain UCBPP-PA14).